We begin with the raw amino-acid sequence, 629 residues long: Ribosomal protein S6 kinase 2 beta (629 aa).

Residues 62–321 (FVLLKVLGQG…AEELKRHPFF (260 aa)) form the Protein kinase 1 domain. Residues 68–76 (LGQGSFGKV) and lysine 94 each bind ATP. Aspartate 187 acts as the Proton acceptor in catalysis. Serine 221 is modified (phosphoserine). The AGC-kinase C-terminal domain occupies 322-391 (STIDWNKLYR…VAPVLVEEDA (70 aa)). At threonine 359 the chain carries Phosphothreonine. Serine 363 carries the post-translational modification Phosphoserine. Serine 380 bears the Phosphoserine; by autocatalysis mark. The region spanning 416-629 (YTVRETIGVG…PEEILARIGS (214 aa)) is the Protein kinase 2 domain. ATP contacts are provided by residues 422–430 (IGVGSYSVC) and lysine 445. Aspartate 533 acts as the Proton acceptor in catalysis. Threonine 571 carries the phosphothreonine modification.

It belongs to the protein kinase superfamily. AGC Ser/Thr protein kinase family. S6 kinase subfamily. Mg(2+) is required as a cofactor. Autophosphorylated on Ser-380, as part of the activation process.

It carries out the reaction L-seryl-[protein] + ATP = O-phospho-L-seryl-[protein] + ADP + H(+). The enzyme catalyses L-threonyl-[protein] + ATP = O-phospho-L-threonyl-[protein] + ADP + H(+). Activated by multiple phosphorylations on threonine and serine residues. In terms of biological role, serine/threonine kinase that may play a role in mediating the growth-factor and stress induced activation of transcription. This Xenopus laevis (African clawed frog) protein is Ribosomal protein S6 kinase 2 beta.